The chain runs to 319 residues: MQDTFSSPEHFTVLLREAVGGLALKENGIYIDGTFGRGGHSRFILSQLSKKGQLIAIDRDPQAIQVAQNIQDSRFRIVHDSFSAIPDICEKLGLTGKIDGILLDLGVSSPQLDNAERGFSFMKDGPLDMRMDTTQGLSATEWLRLVSEQDLAWVLKTFGEERFAKRIAQAIVGYNKSAVQSGAEPLNRTLQLAELIAQSVPFKDKYKHPATRSFQAIRIFINSELDELEKVLNGALNVLAPQGRLSIISFHSLEDRMVKHFIRKQSKGDDLPKGLPLREEQIQHNQKLKPVGKAIMPTEQEMAANVRSRSAVLRIAERI.

S-adenosyl-L-methionine-binding positions include Gly-38 to His-40, Asp-58, Phe-82, Asp-104, and Gln-111.

This sequence belongs to the methyltransferase superfamily. RsmH family.

The protein resides in the cytoplasm. It catalyses the reaction cytidine(1402) in 16S rRNA + S-adenosyl-L-methionine = N(4)-methylcytidine(1402) in 16S rRNA + S-adenosyl-L-homocysteine + H(+). Functionally, specifically methylates the N4 position of cytidine in position 1402 (C1402) of 16S rRNA. In Histophilus somni (strain 129Pt) (Haemophilus somnus), this protein is Ribosomal RNA small subunit methyltransferase H.